The following is a 313-amino-acid chain: Urease accessory protein UreD (313 aa).

The tract at residues 1 to 30 (MTDLSFPGQAASPGEGAGQTPSGGSGHRFD) is disordered. The span at 15–26 (EGAGQTPSGGSG) shows a compositional bias: gly residues.

This sequence belongs to the UreD family. As to quaternary structure, ureD, UreF and UreG form a complex that acts as a GTP-hydrolysis-dependent molecular chaperone, activating the urease apoprotein by helping to assemble the nickel containing metallocenter of UreC. The UreE protein probably delivers the nickel.

It localises to the cytoplasm. Functionally, required for maturation of urease via the functional incorporation of the urease nickel metallocenter. The protein is Urease accessory protein UreD of Chromohalobacter salexigens (strain ATCC BAA-138 / DSM 3043 / CIP 106854 / NCIMB 13768 / 1H11).